We begin with the raw amino-acid sequence, 169 residues long: Inorganic pyrophosphatase (169 aa).

Substrate-binding residues include Lys26, Arg40, and Tyr52. Mg(2+) contacts are provided by Asp62, Asp67, and Asp99. Position 138 (Tyr138) interacts with substrate.

It belongs to the PPase family. In terms of assembly, homohexamer. It depends on Mg(2+) as a cofactor.

The protein resides in the cytoplasm. It catalyses the reaction diphosphate + H2O = 2 phosphate + H(+). In terms of biological role, catalyzes the hydrolysis of inorganic pyrophosphate (PPi) forming two phosphate ions. The polypeptide is Inorganic pyrophosphatase (Thermoplasma volcanium (strain ATCC 51530 / DSM 4299 / JCM 9571 / NBRC 15438 / GSS1)).